We begin with the raw amino-acid sequence, 644 residues long: Threonine--tRNA ligase (644 aa).

The TGS domain maps to 1–61 (MNVTIEGQVF…ADTTTIEPVF (61 aa)). The catalytic stretch occupies residues 241-532 (DHRKLGQQLD…LTEHFAGAFP (292 aa)). Cysteine 333, histidine 384, and histidine 509 together coordinate Zn(2+).

This sequence belongs to the class-II aminoacyl-tRNA synthetase family. In terms of assembly, homodimer. Requires Zn(2+) as cofactor.

It localises to the cytoplasm. The catalysed reaction is tRNA(Thr) + L-threonine + ATP = L-threonyl-tRNA(Thr) + AMP + diphosphate + H(+). In terms of biological role, catalyzes the attachment of threonine to tRNA(Thr) in a two-step reaction: L-threonine is first activated by ATP to form Thr-AMP and then transferred to the acceptor end of tRNA(Thr). Also edits incorrectly charged L-seryl-tRNA(Thr). This Nitratidesulfovibrio vulgaris (strain DSM 19637 / Miyazaki F) (Desulfovibrio vulgaris) protein is Threonine--tRNA ligase.